Consider the following 1396-residue polypeptide: DNA-directed RNA polymerase subunit beta' (1396 aa).

The Zn(2+) site is built by C72, C74, C87, and C90. Mg(2+)-binding residues include D463, D465, and D467. Zn(2+) contacts are provided by C814, C889, C896, and C899.

This sequence belongs to the RNA polymerase beta' chain family. As to quaternary structure, the RNAP catalytic core consists of 2 alpha, 1 beta, 1 beta' and 1 omega subunit. When a sigma factor is associated with the core the holoenzyme is formed, which can initiate transcription. The cofactor is Mg(2+). Requires Zn(2+) as cofactor.

It catalyses the reaction RNA(n) + a ribonucleoside 5'-triphosphate = RNA(n+1) + diphosphate. In terms of biological role, DNA-dependent RNA polymerase catalyzes the transcription of DNA into RNA using the four ribonucleoside triphosphates as substrates. This is DNA-directed RNA polymerase subunit beta' from Chlamydia trachomatis serovar A (strain ATCC VR-571B / DSM 19440 / HAR-13).